A 96-amino-acid chain; its full sequence is Ubiquitin-related modifier 1 (96 aa).

Glycine 96 carries the post-translational modification 1-thioglycine. Glycine 96 is covalently cross-linked (Glycyl lysine isopeptide (Gly-Lys) (interchain with K-? in acceptor proteins)).

Belongs to the URM1 family. Post-translationally, C-terminal thiocarboxylation occurs in 2 steps, it is first acyl-adenylated (-COAMP) via the hesA/moeB/thiF part of UBA4, then thiocarboxylated (-COSH) via the rhodanese domain of UBA4.

Its subcellular location is the cytoplasm. It functions in the pathway tRNA modification; 5-methoxycarbonylmethyl-2-thiouridine-tRNA biosynthesis. Its function is as follows. Acts as a sulfur carrier required for 2-thiolation of mcm(5)S(2)U at tRNA wobble positions of cytosolic tRNA(Lys), tRNA(Glu) and tRNA(Gln). Serves as sulfur donor in tRNA 2-thiolation reaction by being thiocarboxylated (-COSH) at its C-terminus by the MOCS3 homolog UBA4. The sulfur is then transferred to tRNA to form 2-thiolation of mcm(5)S(2)U. Prior mcm(5) tRNA modification by the elongator complex is required for 2-thiolation. Also acts as a ubiquitin-like protein (UBL) that is covalently conjugated via an isopeptide bond to lysine residues of target proteins such as AHP1. The thiocarboxylated form serves as substrate for conjugation and oxidative stress specifically induces the formation of UBL-protein conjugates. This is Ubiquitin-related modifier 1 from Encephalitozoon cuniculi (strain GB-M1) (Microsporidian parasite).